A 652-amino-acid polypeptide reads, in one-letter code: Acetyl-coenzyme A synthetase (652 aa).

CoA contacts are provided by residues 191–194 (RAGR), Thr311, and Asn335. ATP contacts are provided by residues 387 to 389 (GEP), 411 to 416 (DTWWQT), Asp500, and Arg515. Ser523 is a CoA binding site. Arg526 is a binding site for ATP. Residues Val537, His539, and Ile542 each coordinate Mg(2+). Arg584 contributes to the CoA binding site. At Lys609 the chain carries N6-acetyllysine.

Belongs to the ATP-dependent AMP-binding enzyme family. The cofactor is Mg(2+). Acetylated. Deacetylation by the SIR2-homolog deacetylase activates the enzyme.

It carries out the reaction acetate + ATP + CoA = acetyl-CoA + AMP + diphosphate. Functionally, catalyzes the conversion of acetate into acetyl-CoA (AcCoA), an essential intermediate at the junction of anabolic and catabolic pathways. Acs undergoes a two-step reaction. In the first half reaction, Acs combines acetate with ATP to form acetyl-adenylate (AcAMP) intermediate. In the second half reaction, it can then transfer the acetyl group from AcAMP to the sulfhydryl group of CoA, forming the product AcCoA. Enables the cell to use acetate during aerobic growth to generate energy via the TCA cycle, and biosynthetic compounds via the glyoxylate shunt. Acetylates CheY, the response regulator involved in flagellar movement and chemotaxis. The chain is Acetyl-coenzyme A synthetase from Yersinia pestis.